The sequence spans 71 residues: DNA-directed RNA polymerases I, II, and III subunit RPABC5 (71 aa).

4 residues coordinate Zn(2+): Cys7, Cys10, Cys44, and Cys45.

The protein belongs to the archaeal Rpo10/eukaryotic RPB10 RNA polymerase subunit family. Component of the RNA polymerase I (Pol I), RNA polymerase II (Pol II) and RNA polymerase III (Pol III) complexes consisting of at least 13, 12 and 17 subunits, respectively.

It localises to the nucleus. Its function is as follows. DNA-dependent RNA polymerase catalyzes the transcription of DNA into RNA using the four ribonucleoside triphosphates as substrates. Common component of RNA polymerases I, II and III which synthesize ribosomal RNA precursors, mRNA precursors and many functional non-coding RNAs, and a small RNAs, such as 5S rRNA and tRNAs, respectively. Pol II is the central component of the basal RNA polymerase II transcription machinery. Pols are composed of mobile elements that move relative to each other. In Pol II, RBP10 is part of the core element with the central large cleft. The sequence is that of DNA-directed RNA polymerases I, II, and III subunit RPABC5 from Brassica napus (Rape).